The following is a 173-amino-acid chain: NAD(P)H-quinone oxidoreductase subunit I, chloroplastic (173 aa).

2 consecutive 4Fe-4S ferredoxin-type domains span residues 55–84 and 95–124; these read GRIH…VDWD and RSYS…MTEE. Residues Cys64, Cys67, Cys70, Cys74, Cys104, Cys107, Cys110, and Cys114 each coordinate [4Fe-4S] cluster.

This sequence belongs to the complex I 23 kDa subunit family. NDH is composed of at least 16 different subunits, 5 of which are encoded in the nucleus. Requires [4Fe-4S] cluster as cofactor.

The protein resides in the plastid. It is found in the chloroplast thylakoid membrane. The enzyme catalyses a plastoquinone + NADH + (n+1) H(+)(in) = a plastoquinol + NAD(+) + n H(+)(out). It catalyses the reaction a plastoquinone + NADPH + (n+1) H(+)(in) = a plastoquinol + NADP(+) + n H(+)(out). NDH shuttles electrons from NAD(P)H:plastoquinone, via FMN and iron-sulfur (Fe-S) centers, to quinones in the photosynthetic chain and possibly in a chloroplast respiratory chain. The immediate electron acceptor for the enzyme in this species is believed to be plastoquinone. Couples the redox reaction to proton translocation, and thus conserves the redox energy in a proton gradient. The sequence is that of NAD(P)H-quinone oxidoreductase subunit I, chloroplastic from Nephroselmis olivacea (Green alga).